Reading from the N-terminus, the 546-residue chain is CTP synthase (546 aa).

The interval 1–266 (MTTNYIFVTG…DDLVCQRFGI (266 aa)) is amidoligase domain. Ser-14 contacts CTP. Ser-14 contacts UTP. ATP contacts are provided by residues 15–20 (SLGKGI) and Asp-72. The Mg(2+) site is built by Asp-72 and Glu-140. CTP contacts are provided by residues 147 to 149 (DIE), 187 to 192 (KTKPTQ), and Lys-223. UTP is bound by residues 187–192 (KTKPTQ) and Lys-223. 239–241 (KDV) provides a ligand contact to ATP. Residues 291–542 (TIGMVGKYIE…VKAAGENARG (252 aa)) form the Glutamine amidotransferase type-1 domain. Gly-352 serves as a coordination point for L-glutamine. Cys-379 serves as the catalytic Nucleophile; for glutamine hydrolysis. Residues 380 to 383 (LGMQ), Glu-403, and Arg-470 each bind L-glutamine. Residues His-515 and Glu-517 contribute to the active site.

The protein belongs to the CTP synthase family. Homotetramer.

The catalysed reaction is UTP + L-glutamine + ATP + H2O = CTP + L-glutamate + ADP + phosphate + 2 H(+). It carries out the reaction L-glutamine + H2O = L-glutamate + NH4(+). It catalyses the reaction UTP + NH4(+) + ATP = CTP + ADP + phosphate + 2 H(+). Its pathway is pyrimidine metabolism; CTP biosynthesis via de novo pathway; CTP from UDP: step 2/2. Allosterically activated by GTP, when glutamine is the substrate; GTP has no effect on the reaction when ammonia is the substrate. The allosteric effector GTP functions by stabilizing the protein conformation that binds the tetrahedral intermediate(s) formed during glutamine hydrolysis. Inhibited by the product CTP, via allosteric rather than competitive inhibition. Its function is as follows. Catalyzes the ATP-dependent amination of UTP to CTP with either L-glutamine or ammonia as the source of nitrogen. Regulates intracellular CTP levels through interactions with the four ribonucleotide triphosphates. This is CTP synthase from Aliivibrio salmonicida (strain LFI1238) (Vibrio salmonicida (strain LFI1238)).